The sequence spans 182 residues: ADP-ribosylation factor-like protein 3 (182 aa).

A lipid anchor (N-myristoyl glycine) is attached at glycine 2. Serine 5 carries the post-translational modification Phosphoserine. GTP contacts are provided by residues 24–31 (GLDNAGKT), threonine 48, 67–71 (DIGGQ), glycine 70, 126–129 (NKQD), and 159–161 (SAL). Residues threonine 31 and threonine 48 each coordinate Mg(2+).

It belongs to the small GTPase superfamily. Arf family. Found in a complex with ARL3, RP2 and UNC119 (or UNC119B); RP2 induces hydrolysis of GTP ARL3 in the complex, leading to the release of UNC119 (or UNC119B). Interacts with RP2; interaction is direct and stimulated with the activated GTP-bound form of ARL3. Interacts with SYS1. Interacts with ARL2BP; the GTP-bound form interacts with ARL2BP. Microtubule-associated protein. Does not interact with TBCC. Interacts with RP2. Interacts with PDE6D; the interaction occurs specifically with the GTP-bound form of ARL3. Interacts with GGA1; the interaction recruits PKD1:PKD2 complex to trans-Golgi network and is required for ciliary targeting of PKD1:PKD2 complex. Interacts with DNAAF9.

It is found in the golgi apparatus membrane. The protein localises to the cytoplasm. The protein resides in the cytoskeleton. It localises to the spindle. Its subcellular location is the nucleus. It is found in the microtubule organizing center. The protein localises to the centrosome. The protein resides in the cell projection. It localises to the cilium. In terms of biological role, small GTP-binding protein which cycles between an inactive GDP-bound and an active GTP-bound form, and the rate of cycling is regulated by guanine nucleotide exchange factors (GEF) and GTPase-activating proteins (GAP). Required for normal cytokinesis and cilia signaling. Required for targeting proteins to the cilium, including myristoylated NPHP3 and prenylated INPP5E. Targets NPHP3 to the ciliary membrane by releasing myristoylated NPHP3 from UNC119B cargo adapter into the cilium. Requires assistance from GTPase-activating proteins (GAPs) like RP2 and PDE6D, in order to cycle between inactive GDP-bound and active GTP-bound forms. Required for PKD1:PKD2 complex targeting from the trans-Golgi network to the cilium. The sequence is that of ADP-ribosylation factor-like protein 3 from Mus musculus (Mouse).